The primary structure comprises 430 residues: Serine--tRNA ligase (430 aa).

237 to 239 lines the L-serine pocket; it reads TAE. 268 to 270 provides a ligand contact to ATP; sequence RSE. Glu291 is a binding site for L-serine. Position 355–358 (355–358) interacts with ATP; sequence EISS. Position 391 (Ser391) interacts with L-serine.

It belongs to the class-II aminoacyl-tRNA synthetase family. Type-1 seryl-tRNA synthetase subfamily. In terms of assembly, homodimer. The tRNA molecule binds across the dimer.

It is found in the cytoplasm. The catalysed reaction is tRNA(Ser) + L-serine + ATP = L-seryl-tRNA(Ser) + AMP + diphosphate + H(+). It catalyses the reaction tRNA(Sec) + L-serine + ATP = L-seryl-tRNA(Sec) + AMP + diphosphate + H(+). It functions in the pathway aminoacyl-tRNA biosynthesis; selenocysteinyl-tRNA(Sec) biosynthesis; L-seryl-tRNA(Sec) from L-serine and tRNA(Sec): step 1/1. Functionally, catalyzes the attachment of serine to tRNA(Ser). Is also able to aminoacylate tRNA(Sec) with serine, to form the misacylated tRNA L-seryl-tRNA(Sec), which will be further converted into selenocysteinyl-tRNA(Sec). The chain is Serine--tRNA ligase from Salmonella heidelberg (strain SL476).